The sequence spans 408 residues: UPF0761 membrane protein NMC0462 (408 aa).

Helical transmembrane passes span 43–63 (LLAL…FPVF), 100–120 (LTAI…RTID), 139–159 (FLVY…GISF), 176–196 (WSGA…LWGL), 210–230 (AFVG…LFTW), and 248–268 (VPFF…GAVL).

This sequence belongs to the UPF0761 family.

The protein resides in the cell inner membrane. This Neisseria meningitidis serogroup C / serotype 2a (strain ATCC 700532 / DSM 15464 / FAM18) protein is UPF0761 membrane protein NMC0462.